The chain runs to 632 residues: MQREEGFNTKMADGPDEYETETGCVPLLHPEEIKPQSHYNHGYGEPLGRKTHIDDYSTWDIVKATQYGIYERCRELVEAGYDVRQPDKENVTLLHWAAINNRIDLVKYYISKGAIVDQLGGDLNSTPLHWATRQGHLSMVVQLMKYGADPSLIDGEGCSCIHLAAQFGHTSIVAYLIAKGQDVDMMDQNGMTPLMWAAYRTHSVDPTRLLLTFNVSVNLGDKYHKNTALHWAVLAGNTTVISLLLEAGGNVDAQNVKGESALDLAKQRKNVWMINHLQEARQAKGYDNPSFLRKLKADKEFRQKVMLGTPFLVIWLVGFIADLDIDSWLIKGLMYGGVWATVQFLSKSFFDHSMHSALPLGIYLATKFWMYVTWFFWFWNDLNFLFIHLPFLANSVALFYNFGKSWKSDPGIIKATEEQKKKTIVELAETGSLDLSIFCSTCLIRKPVRSKHCGVCNRCIAKFDHHCPWVGNCVGAGNHRYFMGYLFFLLFMICWMIYGCVSYWGLHCETTYTKDGFWTYITQIATCSPWMFWMFLNSVFHFLWVAVLLMCQLYQITCLGITTNERMNARRYKHFKVTTTSIESPFNHGCVRNIIDFFEFRCCGLFRPVIVDWTRQYTIEYDQISGSGYQLV.

The Cytoplasmic portion of the chain corresponds to 1-304 (MQREEGFNTK…LKADKEFRQK (304 aa)). The segment at 11–305 (MADGPDEYET…KADKEFRQKV (295 aa)) is necessary and sufficient for interaction with DNAJC5 and SNAP25. ANK repeat units follow at residues 51–86 (THID…VRQP), 89–118 (ENVT…IVDQ), 123–152 (LNST…DPSL), 156–185 (EGCS…DVDM), 189–219 (NGMT…SVNL), 224–253 (HKNT…NVDA), and 257–286 (KGES…AKGY). Helical transmembrane passes span 305–325 (VMLG…DLDI) and 326–346 (DSWL…QFLS). The Cytoplasmic segment spans residues 347–357 (KSFFDHSMHSA). A helical membrane pass occupies residues 358 to 378 (LPLGIYLATKFWMYVTWFFWF). Residues 379-381 (WND) lie on the Lumenal side of the membrane. Residues 382–402 (LNFLFIHLPFLANSVALFYNF) traverse the membrane as a helical segment. Topologically, residues 403-480 (GKSWKSDPGI…GNCVGAGNHR (78 aa)) are cytoplasmic. The region spanning 437–487 (IFCSTCLIRKPVRSKHCGVCNRCIAKFDHHCPWVGNCVGAGNHRYFMGYLF) is the DHHC domain. The active-site S-palmitoyl cysteine intermediate is Cys-467. Residues 481–501 (YFMGYLFFLLFMICWMIYGCV) form a helical membrane-spanning segment. Topologically, residues 502-529 (SYWGLHCETTYTKDGFWTYITQIATCSP) are lumenal. Residues 530-550 (WMFWMFLNSVFHFLWVAVLLM) traverse the membrane as a helical segment. Topologically, residues 551–632 (CQLYQITCLG…QISGSGYQLV (82 aa)) are cytoplasmic.

This sequence belongs to the DHHC palmitoyltransferase family. AKR/ZDHHC17 subfamily. As to quaternary structure, interacts (via ANK repeats) with numerous proteins (via the consensus sequence motif [VIAP]-[VIT]-x-x-Q-P). Interacts (via ANK repeats) with CLIP3. Interacts (via ANK repeats) with HTT. Interacts (via ANK repeats) with DNAJC5 (via C-terminus). Interacts (via ANK repeats) with MAP6. Interacts (via ANK repeats) with SNAP23. Interacts (via ANK repeats) with SNAP25. Interacts (via ANK repeats) with EVL. Interacts with SPRED1 and SPRED3. Interacts with GPM6A and OPTN. May interact (via ANK repeats) with SPRED2. May interact with NTRK1; may regulate its localization and function. Autopalmitoylated. Autopalmitoylation has a regulatory role in ZDHHC17-mediated Mg(2+) transport. As to expression, expressed in liver, testis, kidney, heart, pancreas and brain. Highest expression was seen in the brain. Localized predominantly in the perinuclear regions of neurons from the cortex, striatum and hippocampus. Colocalized with HTT in the medium spiny neurons of the striatum and the spiny neurons that project into the globus pallidus.

It localises to the golgi apparatus membrane. It is found in the cytoplasmic vesicle membrane. The protein localises to the presynaptic cell membrane. The catalysed reaction is L-cysteinyl-[protein] + hexadecanoyl-CoA = S-hexadecanoyl-L-cysteinyl-[protein] + CoA. The enzyme catalyses L-cysteinyl-[protein] + tetradecanoyl-CoA = S-tetradecanoyl-L-cysteinyl-[protein] + CoA. It carries out the reaction L-cysteinyl-[protein] + octadecanoyl-CoA = S-octadecanoyl-L-cysteinyl-[protein] + CoA. Its function is as follows. Palmitoyltransferase that catalyzes the addition of palmitate onto various protein substrates and is involved in a variety of cellular processes. Has no stringent fatty acid selectivity and in addition to palmitate can also transfer onto target proteins myristate from tetradecanoyl-CoA and stearate from octadecanoyl-CoA. Palmitoyltransferase specific for a subset of neuronal proteins, including SNAP25, DLG4/PSD95, GAD2, SYT1 and HTT. Also palmitoylates neuronal protein GPM6A as well as SPRED1 and SPRED3. Could also play a role in axonogenesis through the regulation of NTRK1 and the downstream ERK1/ERK2 signaling cascade. May be involved in the sorting or targeting of critical proteins involved in the initiating events of endocytosis at the plasma membrane. May play a role in Mg(2+) transport. Could also palmitoylate DNAJC5 and regulate its localization to the Golgi membrane. Palmitoylates CASP6, thereby preventing its dimerization and subsequent activation. The polypeptide is Palmitoyltransferase ZDHHC17 (Mus musculus (Mouse)).